A 194-amino-acid polypeptide reads, in one-letter code: Cathelicidin-related peptide isoform 3 (194 aa).

The N-terminal stretch at 1-22 (MQGFFWKTWLVLAVCGTPASLA) is a signal peptide. The propeptide occupies 23-164 (HRPLSYGEAL…DQPKRVKRFK (142 aa)). Disulfide bonds link Cys-79-Cys-90 and Cys-101-Cys-118. Residues 125–145 (EEEEEEEEEEQKAEAENDEEV) are compositionally biased toward acidic residues. Residues 125 to 156 (EEEEEEEEEEQKAEAENDEEVEKEKGDEEKDQ) are disordered. Residues 146-156 (EKEKGDEEKDQ) show a composition bias toward basic and acidic residues.

This sequence belongs to the cathelicidin family. As to expression, expressed by the venom gland.

It is found in the secreted. It localises to the target cell membrane. In terms of biological role, potent antimicrobial peptide against Gram-negative and Gram-positive bacteria. Adopts an amphipathic alpha helical conformation, that may allow to partition into the target membrane. Low hemolytic activities have been observed on mammalian cells. In Crotalus durissus cascavella (Northeastern Brazilian rattlesnake), this protein is Cathelicidin-related peptide isoform 3.